We begin with the raw amino-acid sequence, 198 residues long: Recombination protein RecR (198 aa).

Residues 57 to 72 form a C4-type zinc finger; the sequence is CRQCRTLSEEELCPQC. The Toprim domain occupies 80–174; the sequence is SLLCVVEGPL…TLSRIAHGVP (95 aa).

The protein belongs to the RecR family.

May play a role in DNA repair. It seems to be involved in an RecBC-independent recombinational process of DNA repair. It may act with RecF and RecO. The sequence is that of Recombination protein RecR from Pseudomonas aeruginosa (strain LESB58).